Reading from the N-terminus, the 440-residue chain is Protein CapE (440 aa).

Transmembrane regions (helical) follow at residues 7 to 27, 31 to 51, 60 to 80, 102 to 122, 141 to 161, 179 to 199, 204 to 224, 249 to 269, 324 to 344, 360 to 380, 382 to 402, and 409 to 429; these read VILI…IGYL, IGFR…VYLL, LVYL…NIFL, FSIA…ISVF, FYYT…FYII, ELPM…FAFS, THIK…LITG, WWMI…IKVF, IFSY…GYGF, YYNG…LLLW, FTNF…SVLI, and FSFV…LLFI.

The protein resides in the cell membrane. The protein operates within capsule biogenesis; capsule polysaccharide biosynthesis. Functionally, required for the biosynthesis of type 1 capsular polysaccharide. The polypeptide is Protein CapE (capE) (Staphylococcus aureus).